Here is a 239-residue protein sequence, read N- to C-terminus: MTVEWLAEQLKEHNIELTETQKQQFQTYYRLLVEWNEKMNLTSITDEHDVYLKHFYDSIAPSFYFDFNQPISICDVGAGAGFPSIPLKIMFPQLKVTIVDSLNKRIQFLNHLASELQLQDVSFIHDRAETFGKGVYRESYDVVTARAVARLSVLSELCLPLIKKGGQFVALKSSKGEEELEEAKFAISVLGGNVTETHTFKLPEDAGERQMFIIDKKRQTPKKYPRKPGTPNKTPLLEK.

S-adenosyl-L-methionine is bound by residues Gly-77, Phe-82, 128 to 129, and Arg-146; that span reads AE. The interval 214–239 is disordered; the sequence is IDKKRQTPKKYPRKPGTPNKTPLLEK.

It belongs to the methyltransferase superfamily. RNA methyltransferase RsmG family.

Its subcellular location is the cytoplasm. Specifically methylates the N7 position of guanine in position 535 of 16S rRNA. The polypeptide is Ribosomal RNA small subunit methyltransferase G (Staphylococcus aureus (strain Mu3 / ATCC 700698)).